A 450-amino-acid polypeptide reads, in one-letter code: Sensor histidine kinase EnvZ (450 aa).

Residues methionine 1–threonine 15 are Cytoplasmic-facing. The chain crosses the membrane as a helical span at residues leucine 16–leucine 35. Over asparagine 36–serine 158 the chain is Periplasmic. The polyP-periplasmic motif signature appears at valine 71–alanine 75. A helical transmembrane segment spans residues proline 159 to isoleucine 179. The HAMP domain occupies arginine 180–aspartate 232. The Cytoplasmic portion of the chain corresponds to arginine 180–glycine 450. The polyP-cytoplasmic motif signature appears at isoleucine 201–leucine 205. Residues methionine 223–arginine 289 are cytoplasmic dimerization domain (CDD), when dimerized forms osmosensitive core. The Histidine kinase domain occupies glycine 240–valine 440. Residues histidine 243, asparagine 347–tyrosine 351, aspartate 373, arginine 392–glycine 393, and threonine 402–leucine 406 contribute to the ATP site. A Phosphohistidine; by autocatalysis modification is found at histidine 243.

As to quaternary structure, homodimer. Interacts with MzrA. Autophosphorylated. Incubation of isolated EnvZ C-terminal fragment (residues 180-450) with increasing levels of NaCl or sucrose increases its autophosphorylation.

It localises to the cell inner membrane. The enzyme catalyses ATP + protein L-histidine = ADP + protein N-phospho-L-histidine.. Activity is modulated by MzrA. In the presence of 0.2 M NaCl, 2.0 mM sodium cholate (bile salts) decreases expression from the ompC promoter; how this is mediated is unknown. Autophosphorylation is inhibited by the angucycline antibiotic waldiomycin in a non-competitive manner; waldiomycin prevents dimerization of the cytoplasmic domain and autophosphorylation. Its function is as follows. Member of the two-component regulatory system EnvZ/OmpR involved in osmoregulation (particularly of genes ompF and ompC) as well as other genes. EnvZ functions as a membrane-associated protein kinase that phosphorylates OmpR in response to environmental signals; at low osmolarity OmpR activates ompF transcription, while at high osmolarity it represses ompF and activates ompC transcription. Also dephosphorylates OmpR in the presence of ATP. The cytoplasmic dimerization domain (CDD) forms an osmosensitive core; increasing osmolarity stabilizes this segment (possibly by its contraction), enhancing the autophosphorylation rate and consequently, downstream phosphotransfer to OmpR and signaling. Autophosphorylation is greater when full-length EnvZ is reconstituted in a lipid environment, lipid-mediated allostery impacts the kinase function of EnvZ. Involved in acid stress response; this requires EnvZ but not OmpR phosphorylation, and suggests that EnvZ senses cytoplasmic acidic pH. The sequence is that of Sensor histidine kinase EnvZ (envZ) from Escherichia coli (strain K12).